We begin with the raw amino-acid sequence, 177 residues long: Protein Flattop (177 aa).

The interval 113 to 177 (ILGKPHDPDS…TPGPQRPAKS (65 aa)) is disordered. The segment covering 115–124 (GKPHDPDSQK) has biased composition (basic and acidic residues). The segment covering 132 to 163 (TKTVQQARSPTIIPSSPAANLNSPDELQSSHP) has biased composition (polar residues).

It belongs to the Flattop family. Microtubule inner protein component of sperm flagellar doublet microtubules. Interacts with DLG3. In terms of tissue distribution, expressed in airway epithelial cells.

Its subcellular location is the cytoplasm. The protein resides in the cytoskeleton. It localises to the cilium basal body. The protein localises to the cell projection. It is found in the cilium. Its subcellular location is the apical cell membrane. The protein resides in the cilium axoneme. It localises to the flagellum axoneme. Microtubule inner protein (MIP) part of the dynein-decorated doublet microtubules (DMTs) in cilia axoneme. Acts as a regulator of cilium basal body docking and positioning in mono- and multiciliated cells. Regulates basal body docking and cilia formation in multiciliated lung cells. Regulates kinocilium positioning and stereocilia bundle morphogenesis in the inner ear. This chain is Protein Flattop, found in Homo sapiens (Human).